Reading from the N-terminus, the 361-residue chain is Phosphoserine aminotransferase (361 aa).

Residue R42 coordinates L-glutamate. Residues 76 to 77 (AR), W102, T153, D173, and Q196 each bind pyridoxal 5'-phosphate. At K197 the chain carries N6-(pyridoxal phosphate)lysine. 238-239 (NT) contacts pyridoxal 5'-phosphate.

This sequence belongs to the class-V pyridoxal-phosphate-dependent aminotransferase family. SerC subfamily. Homodimer. It depends on pyridoxal 5'-phosphate as a cofactor.

The protein resides in the cytoplasm. It catalyses the reaction O-phospho-L-serine + 2-oxoglutarate = 3-phosphooxypyruvate + L-glutamate. The enzyme catalyses 4-(phosphooxy)-L-threonine + 2-oxoglutarate = (R)-3-hydroxy-2-oxo-4-phosphooxybutanoate + L-glutamate. Its pathway is amino-acid biosynthesis; L-serine biosynthesis; L-serine from 3-phospho-D-glycerate: step 2/3. It participates in cofactor biosynthesis; pyridoxine 5'-phosphate biosynthesis; pyridoxine 5'-phosphate from D-erythrose 4-phosphate: step 3/5. Catalyzes the reversible conversion of 3-phosphohydroxypyruvate to phosphoserine and of 3-hydroxy-2-oxo-4-phosphonooxybutanoate to phosphohydroxythreonine. This is Phosphoserine aminotransferase from Buchnera aphidicola subsp. Acyrthosiphon pisum (strain Tuc7).